The sequence spans 127 residues: MSSDPHMLGIQGEQIAAAYLSRHGYRIIQRNYRYRRNEIDIIAKKHATICFIEVKTRASLEKGHPSEAVTPKKQKEIIKAAKSYLFSLGTDRCECRFDVIAILVRSMKQEEIGLYDLDHFTDAFQAE.

Belongs to the UPF0102 family.

This is UPF0102 protein Cpha266_0037 from Chlorobium phaeobacteroides (strain DSM 266 / SMG 266 / 2430).